The primary structure comprises 250 residues: Small ribosomal subunit protein uS2 (250 aa).

This sequence belongs to the universal ribosomal protein uS2 family.

The polypeptide is Small ribosomal subunit protein uS2 (Paracidovorax citrulli (strain AAC00-1) (Acidovorax citrulli)).